The chain runs to 257 residues: MDRIIEKLESGWWIVSHEQKLWLPYGELPHGLAANFDLVGQRALRIGEWQGEPVWLVLQHRRHDMGSVRQVIDQEAGLFQLAGRGVQLAEFYRSHKFCGYCGHPMHPSKTEWAMLCSHCRERYYPQIAPCIIVAIRREDSILLAQHVRHRNGVHTVLAGFVEVGETLEQAVAREVMEESGIKVKNLRYVTSQPWPFPQSLMTAFMAEYDSGEIVIDPKELLEANWYRYDDLPLLPPPGTVARRLIEDTVAMCRAEYD.

R69 contributes to the substrate binding site. 2 residues coordinate Zn(2+): C98 and C101. A substrate-binding site is contributed by E111. Residues C116 and C119 each contribute to the Zn(2+) site. Position 124 (Y124) interacts with substrate. The Nudix hydrolase domain occupies 125-248 (PQIAPCIIVA…TVARRLIEDT (124 aa)). Residues A158, E174, and E178 each contribute to the a divalent metal cation site. Residues 159 to 180 (GFVEVGETLEQAVAREVMEESG) carry the Nudix box motif. Substrate is bound at residue 192–199 (QPWPFPQS). Position 219 (E219) interacts with a divalent metal cation. A241 lines the substrate pocket.

The protein belongs to the Nudix hydrolase family. NudC subfamily. Homodimer. The cofactor is Mg(2+). Mn(2+) serves as cofactor. It depends on Zn(2+) as a cofactor.

It carries out the reaction a 5'-end NAD(+)-phospho-ribonucleoside in mRNA + H2O = a 5'-end phospho-adenosine-phospho-ribonucleoside in mRNA + beta-nicotinamide D-ribonucleotide + 2 H(+). It catalyses the reaction NAD(+) + H2O = beta-nicotinamide D-ribonucleotide + AMP + 2 H(+). The enzyme catalyses NADH + H2O = reduced beta-nicotinamide D-ribonucleotide + AMP + 2 H(+). Functionally, mRNA decapping enzyme that specifically removes the nicotinamide adenine dinucleotide (NAD) cap from a subset of mRNAs by hydrolyzing the diphosphate linkage to produce nicotinamide mononucleotide (NMN) and 5' monophosphate mRNA. The NAD-cap is present at the 5'-end of some mRNAs and stabilizes RNA against 5'-processing. Has preference for mRNAs with a 5'-end purine. Catalyzes the hydrolysis of a broad range of dinucleotide pyrophosphates. The sequence is that of NAD-capped RNA hydrolase NudC from Salmonella typhimurium (strain LT2 / SGSC1412 / ATCC 700720).